We begin with the raw amino-acid sequence, 197 residues long: Phosphoheptose isomerase (197 aa).

One can recognise an SIS domain in the interval 34-196 (MVHCLLGGNK…DRTLFPQDEQ (163 aa)). 49 to 51 (NGG) contributes to the substrate binding site. His58 and Glu62 together coordinate Zn(2+). Substrate contacts are provided by residues Glu62, 91-92 (ND), 117-119 (STS), Ser122, and Gln172. Zn(2+) is bound by residues Gln172 and His180.

The protein belongs to the SIS family. GmhA subfamily. As to quaternary structure, homotetramer. It depends on Zn(2+) as a cofactor.

It is found in the cytoplasm. The enzyme catalyses 2 D-sedoheptulose 7-phosphate = D-glycero-alpha-D-manno-heptose 7-phosphate + D-glycero-beta-D-manno-heptose 7-phosphate. Its pathway is carbohydrate biosynthesis; D-glycero-D-manno-heptose 7-phosphate biosynthesis; D-glycero-alpha-D-manno-heptose 7-phosphate and D-glycero-beta-D-manno-heptose 7-phosphate from sedoheptulose 7-phosphate: step 1/1. Functionally, catalyzes the isomerization of sedoheptulose 7-phosphate in D-glycero-D-manno-heptose 7-phosphate. The sequence is that of Phosphoheptose isomerase from Shewanella baltica (strain OS223).